The sequence spans 287 residues: Elongation factor Ts (287 aa).

The tract at residues 80–83 (TDFL) is involved in Mg(2+) ion dislocation from EF-Tu.

The protein belongs to the EF-Ts family.

It is found in the cytoplasm. Associates with the EF-Tu.GDP complex and induces the exchange of GDP to GTP. It remains bound to the aminoacyl-tRNA.EF-Tu.GTP complex up to the GTP hydrolysis stage on the ribosome. This Ectopseudomonas mendocina (strain ymp) (Pseudomonas mendocina) protein is Elongation factor Ts.